Reading from the N-terminus, the 163-residue chain is 6,7-dimethyl-8-ribityllumazine synthase (163 aa).

Residues Phe27, Ala58 to Glu60, and Cys87 to Val89 each bind 5-amino-6-(D-ribitylamino)uracil. Position 92–93 (Asp92–Thr93) interacts with (2S)-2-hydroxy-3-oxobutyl phosphate. The active-site Proton donor is the His95. Asn120 provides a ligand contact to 5-amino-6-(D-ribitylamino)uracil. A (2S)-2-hydroxy-3-oxobutyl phosphate-binding site is contributed by Arg134.

It belongs to the DMRL synthase family.

It carries out the reaction (2S)-2-hydroxy-3-oxobutyl phosphate + 5-amino-6-(D-ribitylamino)uracil = 6,7-dimethyl-8-(1-D-ribityl)lumazine + phosphate + 2 H2O + H(+). It participates in cofactor biosynthesis; riboflavin biosynthesis; riboflavin from 2-hydroxy-3-oxobutyl phosphate and 5-amino-6-(D-ribitylamino)uracil: step 1/2. Functionally, catalyzes the formation of 6,7-dimethyl-8-ribityllumazine by condensation of 5-amino-6-(D-ribitylamino)uracil with 3,4-dihydroxy-2-butanone 4-phosphate. This is the penultimate step in the biosynthesis of riboflavin. This is 6,7-dimethyl-8-ribityllumazine synthase from Nitrobacter winogradskyi (strain ATCC 25391 / DSM 10237 / CIP 104748 / NCIMB 11846 / Nb-255).